Consider the following 251-residue polypeptide: MAAHLLIVDALNLIRRIHAVQGSPCVETCQHALDQLIIHSQPTHAVAVFDDDARSSGWRHQRLPDYKAGRPPMPDDLHNEMPALRAAFEQRGIRCWASDGNEADDLAATLALKVTEAGHQATIVSTDKGYCQLLSPGLRIRDYFQKRWLDAPFIEKEFGVLPRQLPDYWGLAGISSSKVPGVAGIGPKSATQLLIQFQNLEGIYAHLDEVPEKWRKKLETHKEMAFLCRDIARLQTDLHIDGNLQQLRLAR.

Asp104 is a binding site for Mg(2+). In terms of domain architecture, 5'-3' exonuclease spans 160 to 249 (VLPRQLPDYW…IDGNLQQLRL (90 aa)). Residues Leu171, Ala172, Pro180, Val182, and Ile185 each coordinate K(+). Positions 184 to 189 (GIGPKS) are interaction with DNA.

The protein belongs to the Xni family. It depends on Mg(2+) as a cofactor. K(+) is required as a cofactor.

Has flap endonuclease activity. During DNA replication, flap endonucleases cleave the 5'-overhanging flap structure that is generated by displacement synthesis when DNA polymerase encounters the 5'-end of a downstream Okazaki fragment. In Salmonella dublin (strain CT_02021853), this protein is Flap endonuclease Xni.